A 472-amino-acid chain; its full sequence is Probable low-salt glycan biosynthesis flippase Agl15 (472 aa).

The next 13 membrane-spanning stretches (helical) occupy residues 8–28 (IKLF…ITFF), 38–58 (GVFF…DFGL), 77–97 (SSAI…IVVF), 109–129 (FAVY…AVSV), 164–184 (AEAL…WGLS), 209–229 (VVSS…IGIF), 244–264 (VTAI…PQVS), 289–309 (LVIP…GIVF), 315–335 (IASY…VHVI), 354–374 (VISV…FGIV), 375–395 (GAAV…AHYL), 408–428 (IGWC…FKTL), and 434–454 (LIQL…ITLL).

The protein belongs to the AglR/Agl15 family.

The protein localises to the cell membrane. It participates in protein modification; protein glycosylation. It functions in the pathway cell surface structure biogenesis; S-layer biogenesis. Its function is as follows. Flippase involved in N-glycan biosynthetic pathway that takes place under low-salt conditions (1.75 M instead of 3.4 M). Participates in the formation of the tetrasaccharide present at 'Asn-532' of S-layer glycoprotein Csg, consisting of a sulfated hexose, 2 hexoses and rhamnose. Probably moves the tetrasaccharide from the cytosolic to the extracytosolic side of the membrane. This is Probable low-salt glycan biosynthesis flippase Agl15 (agl15) from Haloferax volcanii (strain ATCC 29605 / DSM 3757 / JCM 8879 / NBRC 14742 / NCIMB 2012 / VKM B-1768 / DS2) (Halobacterium volcanii).